We begin with the raw amino-acid sequence, 361 residues long: Anhydro-N-acetylmuramic acid kinase (361 aa).

10-17 contributes to the ATP binding site; that stretch reads GTSLDGVD.

Belongs to the anhydro-N-acetylmuramic acid kinase family.

It catalyses the reaction 1,6-anhydro-N-acetyl-beta-muramate + ATP + H2O = N-acetyl-D-muramate 6-phosphate + ADP + H(+). Its pathway is amino-sugar metabolism; 1,6-anhydro-N-acetylmuramate degradation. It participates in cell wall biogenesis; peptidoglycan recycling. Its function is as follows. Catalyzes the specific phosphorylation of 1,6-anhydro-N-acetylmuramic acid (anhMurNAc) with the simultaneous cleavage of the 1,6-anhydro ring, generating MurNAc-6-P. Is required for the utilization of anhMurNAc either imported from the medium or derived from its own cell wall murein, and thus plays a role in cell wall recycling. In Gluconobacter oxydans (strain 621H) (Gluconobacter suboxydans), this protein is Anhydro-N-acetylmuramic acid kinase.